A 54-amino-acid polypeptide reads, in one-letter code: UPF0391 membrane protein Daro_2080 (54 aa).

A run of 2 helical transmembrane segments spans residues 5–25 (AIVF…GIAA) and 30–50 (IAKI…VMGF).

This sequence belongs to the UPF0391 family.

The protein resides in the cell membrane. This Dechloromonas aromatica (strain RCB) protein is UPF0391 membrane protein Daro_2080.